The chain runs to 485 residues: Palmitoyltransferase ZDHHC1 (485 aa).

Residues 1–41 (MYKMNICNKPSNKTAPEKSVWTAPAQPSGPSPELQGQRSRR) are disordered. Residues 1–52 (MYKMNICNKPSNKTAPEKSVWTAPAQPSGPSPELQGQRSRRNGWSWPPHPLQ) are Cytoplasmic-facing. A mediates interaction with STING1 region spans residues 1 to 271 (MYKMNICNKP…GHLLCFHIYL (271 aa)). The chain crosses the membrane as a helical span at residues 53-73 (IVAWLLYLFFAVIGFGILVPL). Residues 74-77 (LPHH) lie on the Lumenal side of the membrane. The chain crosses the membrane as a helical span at residues 78–98 (WVPAGYACMGAIFAGHLVVHL). Over 99–185 (TAVSIDPADA…YRLFLHSVAS (87 aa)) the chain is Cytoplasmic. Residues 134–184 (LHCNLCNVDVSARSKHCSACNKCVCGFDHHCKWLNNCVGERNYRLFLHSVA) form the DHHC domain. The active-site S-palmitoyl cysteine intermediate is the Cys-164. The helical transmembrane segment at 186 to 206 (ALLGVLLLVLVATYVFVEFFV) threads the bilayer. The Lumenal segment spans residues 207–241 (NPMRLRTNRHFEVLKNHTDVWFVFLPAAPVETQAP). Residues 242–262 (AILALAALLILLGLLSTALLG) form a helical membrane-spanning segment. Residues 263–485 (HLLCFHIYLM…RGRRVRPPFS (223 aa)) lie on the Cytoplasmic side of the membrane. Disordered regions lie at residues 324–358 (EPPG…GPPV) and 462–485 (LWPP…PPFS). Basic residues predominate over residues 475–485 (WRGRRVRPPFS).

This sequence belongs to the DHHC palmitoyltransferase family. As to quaternary structure, interacts with STING1; ZDHHC1 constitutively interacts with STING1 and in presence of DNA viruses activates it by promoting its cGAMP-induced oligomerization and the recruitment of downstream signaling components. Widely expressed with significant expression in heart, brain, placenta, lung, liver, kidney, testis, thymus and small intestine. Expressed at lower levels in adult pancreas and lung.

The protein resides in the endosome membrane. It localises to the endoplasmic reticulum membrane. The protein localises to the golgi apparatus. The catalysed reaction is L-cysteinyl-[protein] + hexadecanoyl-CoA = S-hexadecanoyl-L-cysteinyl-[protein] + CoA. Functionally, palmitoyltransferase that catalyzes the addition of palmitate onto various protein substrates, such as NCDN and NLRP3. Has a palmitoyltransferase activity toward NCDN and regulates NCDN association with endosome membranes through this palmitoylation. Acts as an activator of the NLRP3 inflammasome by mediating palmitoylation of 'Cys-130' and 'Cys-958' of NLRP3, thereby promoting NLRP3 phosphorylation and activation by NEK7. Its function is as follows. Also has a palmitoyltransferase activity-independent function in DNA virus-triggered and CGAS-mediated innate immune response. Functions as an activator of STING1 by promoting its cGAMP-induced oligomerization and the recruitment of downstream signaling components. The chain is Palmitoyltransferase ZDHHC1 from Homo sapiens (Human).